The following is a 132-amino-acid chain: Large ribosomal subunit protein uL22c (132 aa).

Belongs to the universal ribosomal protein uL22 family. Part of the 50S ribosomal subunit.

It localises to the plastid. The protein localises to the chloroplast. Its function is as follows. This protein binds specifically to 23S rRNA. Functionally, the globular domain of the protein is located near the polypeptide exit tunnel on the outside of the subunit, while an extended beta-hairpin is found that lines the wall of the exit tunnel in the center of the 70S ribosome. The polypeptide is Large ribosomal subunit protein uL22c (rpl22) (Populus alba (White poplar)).